Here is a 357-residue protein sequence, read N- to C-terminus: MSEGQKFQLGTIGALSLSVVSSVSIVICNKALISTLGFTFATTLTSWHLLVTFCSLHVALWMKMFEHKPFDPRAVMGFGILNGISIGLLNLSLGFNSVGFYQMTKLAIIPCTVLLETLFFRKKFSRKIQFSLTILLLGVGIATVTDLQLNMLGSVLSLLAVVTTCVAQIMTNTIQKKFKVSSTQLLYQSCPYQAITLFVTGPFLDGLLTNQNVFAFKYTSQVVFFIVLSCLISVSVNFSTFLVIGKTSPVTYQVLGHLKTCLVLAFGYVLLRDPFDWRNILGILVAVIGMVVYSYYCSIETQQKASETSTQLPQMKESEKDPLIAAENGSGVLSDGGGGVQQKTVAPVWNSNKDFQA.

10 consecutive transmembrane segments (helical) span residues 7 to 27, 31 to 51, 75 to 95, 100 to 120, 132 to 152, 154 to 174, 194 to 214, 224 to 244, 250 to 270, and 280 to 300; these read FQLG…SIVI, ALIS…HLLV, VMGF…SLGF, FYQM…TLFF, LTIL…LNML, SVLS…TNTI, AITL…QNVF, FFIV…FLVI, VTYQ…GYVL, and ILGI…CSIE. Position 334 is a phosphoserine (S334).

The protein belongs to the TPT transporter family. TPT (TC 2.A.7.9) subfamily. As to expression, ubiquitous.

It localises to the golgi apparatus membrane. Its function is as follows. Nucleotide-sugar transporter that transports UDP-xylose and UMP in a strict counter-exchange mode. The protein is UDP-xylose transporter 3 of Arabidopsis thaliana (Mouse-ear cress).